Consider the following 140-residue polypeptide: Large-conductance mechanosensitive channel (140 aa).

2 consecutive transmembrane segments (helical) span residues 16–36 (VIDLAVGVVIGAAFGKIVTAL) and 84–104 (INTVVQFVIIAFAIFLLVKLI).

It belongs to the MscL family. Homopentamer.

The protein localises to the cell inner membrane. Its function is as follows. Channel that opens in response to stretch forces in the membrane lipid bilayer. May participate in the regulation of osmotic pressure changes within the cell. The polypeptide is Large-conductance mechanosensitive channel (Xanthomonas oryzae pv. oryzae (strain PXO99A)).